Here is a 735-residue protein sequence, read N- to C-terminus: Disintegrin and metalloproteinase domain-containing protein 2 (735 aa).

An N-terminal signal peptide occupies residues 1–16 (MWRVLFLLSGLGGLWM). Positions 17–174 (DSNFDSLPVQ…FKLQSIEPQK (158 aa)) are excised as a propeptide. Residues 17–686 (DSNFDSLPVQ…ENVYHSKPMR (670 aa)) are Extracellular-facing. Asparagine 76, asparagine 122, and asparagine 220 each carry an N-linked (GlcNAc...) asparagine glycan. One can recognise a Peptidase M12B domain in the interval 178–375 (KYIEMHVVVE…QKSQCLHNQP (198 aa)). Disulfide bonds link cysteine 287/cysteine 370, cysteine 329/cysteine 354, cysteine 331/cysteine 336, and cysteine 445/cysteine 465. Residues asparagine 353, asparagine 459, and asparagine 566 are each glycosylated (N-linked (GlcNAc...) asparagine). Residues 384–473 (QAVCGNAKLE…SCPENHFIQT (90 aa)) form the Disintegrin domain. The region spanning 612-645 (LGYDCTTDKCNHRGVCNNKKHCHCSASYLPPDCS) is the EGF-like domain. Cystine bridges form between cysteine 616–cysteine 627, cysteine 621–cysteine 633, and cysteine 635–cysteine 644. Residues 687 to 707 (WPLFLFIPFFIIFCVLIAIMV) traverse the membrane as a helical segment. At 708–735 (KVHFQRKKWRTEDYSTDEQPESESEPKG) the chain is on the cytoplasmic side. Serine 729 carries the phosphoserine modification.

As to quaternary structure, heterodimer with ADAM1/fertilin subunit alpha. In terms of processing, the signal and the metalloprotease domain are cleaved during the epididymal maturation of the spermatozoa. Expressed specifically in testis.

It is found in the membrane. In terms of biological role, sperm surface membrane protein that may be involved in sperm-egg plasma membrane adhesion and fusion during fertilization. Could have a direct role in sperm-zona binding or migration of sperm from the uterus into the oviduct. Interactions with egg membrane could be mediated via binding between its disintegrin-like domain to one or more integrins receptors on the egg. This is a non catalytic metalloprotease-like protein. The protein is Disintegrin and metalloproteinase domain-containing protein 2 (ADAM2) of Macaca fascicularis (Crab-eating macaque).